Reading from the N-terminus, the 172-residue chain is Stellate protein CG33236/CG33240/CG33244/CG33245 (172 aa).

It belongs to the casein kinase 2 subunit beta family. Interacts in vitro with the casein kinase 2 alpha subunit (CkII-alpha). The relevance of such interaction is however unclear in vivo. As to expression, probably not expressed in wild-type flies. In males lacking the Y chromosome, it is testis-specific and constitutes the main component of star-shaped crystals.

Unknown. In males lacking the Y chromosome, its strong overexpression leads to the appearance of proteinaceous star-shaped crystals in the primary spermatocytes causing meiotic drive, possibly by interfering with normal casein kinase 2 activity. The protein is Stellate protein CG33236/CG33240/CG33244/CG33245 (Ste:CG33236) of Drosophila melanogaster (Fruit fly).